We begin with the raw amino-acid sequence, 349 residues long: Green-sensitive opsin-2 (349 aa).

At 1 to 36 (MNGTEGNNFYVPLSNRTGLVRSPFEYPQYYLAEPWQ) the chain is on the extracellular side. Residues N2 and N15 are each glycosylated (N-linked (GlcNAc...) asparagine). Residues 37-61 (FKLLAVYMFFLICLGLPINGLTLIC) traverse the membrane as a helical segment. Residues 62 to 73 (TAQHKKLRQPLN) lie on the Cytoplasmic side of the membrane. The chain crosses the membrane as a helical span at residues 74 to 99 (FILVNLAVAGAIMVCFGFTVTFYTAI). At 100 to 113 (NGYFALGPTGCAVE) the chain is on the extracellular side. Residues C110 and C187 are joined by a disulfide bond. Residues 114–133 (GFMATLGGEVALWSLVVLAI) form a helical membrane-spanning segment. Residues 134–152 (ERYIVVCKPMGSFKFSSTH) lie on the Cytoplasmic side of the membrane. The chain crosses the membrane as a helical span at residues 153 to 176 (ASAGIAFTWVMAMACAAPPLVGWS). The Extracellular segment spans residues 177–202 (RYIPEGIQCSCGPDYYTLNPEYNNES). Residues 203-230 (YVLYMFICHFILPVTIIFFTYGRLVCTV) traverse the membrane as a helical segment. At 231-252 (KAAAAQQQDSASTQKAEREVTK) the chain is on the cytoplasmic side. A helical membrane pass occupies residues 253 to 276 (MVILMVLGFLVAWTPYATVAAWIF). The Extracellular segment spans residues 277–284 (FNKGAAFS). A helical membrane pass occupies residues 285–309 (AQFMAIPAFFSKTSALYNPVIYVLL). N6-(retinylidene)lysine is present on K296. Topologically, residues 310-349 (NKQFRSCMLTTLFCGKNPLGDEESSTVSTSKTEVSSVSPA) are cytoplasmic. Residues 329–349 (GDEESSTVSTSKTEVSSVSPA) are disordered. Low complexity predominate over residues 334 to 349 (STVSTSKTEVSSVSPA).

It belongs to the G-protein coupled receptor 1 family. Opsin subfamily. In terms of processing, phosphorylated on some or all of the serine and threonine residues present in the C-terminal region. The color pigments are found in the cone photoreceptor cells.

It is found in the membrane. Visual pigments are the light-absorbing molecules that mediate vision. They consist of an apoprotein, opsin, covalently linked to cis-retinal. The protein is Green-sensitive opsin-2 of Carassius auratus (Goldfish).